The following is a 108-amino-acid chain: U-scoloptoxin(16)-Sm1a (108 aa).

The first 19 residues, 1–19 (MNLFLVLFVFSFSVSQFFA), serve as a signal peptide directing secretion.

The protein belongs to the scoloptoxin-16 family. Post-translationally, contains 4 disulfide bonds. In terms of tissue distribution, expressed by the venom gland.

Its subcellular location is the secreted. The chain is U-scoloptoxin(16)-Sm1a from Scolopendra morsitans (Tanzanian blue ringleg centipede).